The following is a 149-amino-acid chain: Large ribosomal subunit protein uL11 (149 aa).

The protein belongs to the universal ribosomal protein uL11 family. As to quaternary structure, part of the ribosomal stalk of the 50S ribosomal subunit. Interacts with L10 and the large rRNA to form the base of the stalk. L10 forms an elongated spine to which L12 dimers bind in a sequential fashion forming a multimeric L10(L12)X complex. Post-translationally, one or more lysine residues are methylated.

Its function is as follows. Forms part of the ribosomal stalk which helps the ribosome interact with GTP-bound translation factors. The chain is Large ribosomal subunit protein uL11 from Methylobacterium radiotolerans (strain ATCC 27329 / DSM 1819 / JCM 2831 / NBRC 15690 / NCIMB 10815 / 0-1).